A 96-amino-acid polypeptide reads, in one-letter code: ESAT-6-like protein EsxR (96 aa).

Belongs to the WXG100 family. ESAT-6 subfamily.

The protein resides in the secreted. In Mycobacterium bovis (strain ATCC BAA-935 / AF2122/97), this protein is ESAT-6-like protein EsxR.